The primary structure comprises 153 residues: Endoribonuclease YbeY (153 aa).

Residues His113, His117, and His123 each contribute to the Zn(2+) site.

The protein belongs to the endoribonuclease YbeY family. Requires Zn(2+) as cofactor.

Its subcellular location is the cytoplasm. Single strand-specific metallo-endoribonuclease involved in late-stage 70S ribosome quality control and in maturation of the 3' terminus of the 16S rRNA. This Aliivibrio salmonicida (strain LFI1238) (Vibrio salmonicida (strain LFI1238)) protein is Endoribonuclease YbeY.